The sequence spans 729 residues: Glutamine synthetase (729 aa).

A GS beta-grasp domain is found at 85-174 (THYTHWFQPL…IPTIFISYTG (90 aa)). One can recognise a GS catalytic domain in the interval 179-615 (YKTPLLKALA…VLGDLAINHI (437 aa)). Mg(2+) is bound by residues Glu-215, Glu-217, Glu-286, and Glu-293. L-glutamate-binding positions include 337–338 (NG) and Gly-338. His-342 provides a ligand contact to Mg(2+). ATP is bound by residues Ser-346 and Arg-458. Arg-458 lines the L-glutamate pocket.

The protein belongs to the glutamine synthetase family. In terms of assembly, homohexamer. The cofactor is Mg(2+).

Its subcellular location is the cytoplasm. The enzyme catalyses L-glutamate + NH4(+) + ATP = L-glutamine + ADP + phosphate + H(+). Its activity is regulated as follows. Inhibited by L-histidine (46%), L-arginine (38%) and L-methionine-DL-sulphoximine. The activity of this enzyme is not controlled by adenylation. Catalyzes the ATP-dependent biosynthesis of glutamine from glutamate and ammonia. This chain is Glutamine synthetase, found in Bacteroides fragilis (strain YCH46).